The following is a 344-amino-acid chain: MSDAARPLDPDEAARRLGPWLGAGGQAGGVVLAVSGGPDSTALMGCAAALPPRVPVLVATVDHGLRPESGEEAAGVAALAGRLGLPHRILTWRGEKPRTRLQEAARAARYDLLLGLAREAGAGAILTAHTLDDQAETVLMRLCAGSGPAGLAGIAPARRLGGLLLGRPFLDLPKARLVATCAAAGWPFAVDPGNAAARFARARLRRVMPLLAAEGLTPARLARLAARLRRNEAALAAAAEAARPSLAAAPAGPGRLALDAAGLAALPEAVALRVLADAIAALRAGERRPERLERLEEALFGRILPAIAAGTPLRLTLGGALLDLAGGRLLLAPEPPRRRTKRAG.

ATP is bound at residue 35–40 (SGGPDS).

It belongs to the tRNA(Ile)-lysidine synthase family.

The protein localises to the cytoplasm. The enzyme catalyses cytidine(34) in tRNA(Ile2) + L-lysine + ATP = lysidine(34) in tRNA(Ile2) + AMP + diphosphate + H(+). In terms of biological role, ligates lysine onto the cytidine present at position 34 of the AUA codon-specific tRNA(Ile) that contains the anticodon CAU, in an ATP-dependent manner. Cytidine is converted to lysidine, thus changing the amino acid specificity of the tRNA from methionine to isoleucine. The protein is tRNA(Ile)-lysidine synthase of Methylobacterium sp. (strain 4-46).